The sequence spans 217 residues: tRNA 5-hydroxyuridine methyltransferase (217 aa).

Residues methionine 38, serine 68, glutamate 85, 113–114 (DA), and aspartate 133 contribute to the S-adenosyl-L-methionine site. The Mg(2+) site is built by aspartate 133, aspartate 159, and asparagine 160.

This sequence belongs to the class I-like SAM-binding methyltransferase superfamily. Cation-dependent O-methyltransferase family. Homodimer.

The enzyme catalyses 5-hydroxyuridine(34) in tRNA + S-adenosyl-L-methionine = 5-methoxyuridine(34) in tRNA + S-adenosyl-L-homocysteine + H(+). Catalyzes the methylation of 5-hydroxyuridine (ho5U) to form 5-methoxyuridine (mo5U) at position 34 in tRNAs. The chain is tRNA 5-hydroxyuridine methyltransferase from Bacillus subtilis (strain 168).